Consider the following 321-residue polypeptide: Anthranilate phosphoribosyltransferase (321 aa).

Residues G72, 75 to 76, T80, 82 to 85, 99 to 107, and S111 contribute to the 5-phospho-alpha-D-ribose 1-diphosphate site; these read GD, NVST, and KHGNVSVTS. An anthranilate-binding site is contributed by G72. S84 is a Mg(2+) binding site. Residue N102 coordinates anthranilate. An anthranilate-binding site is contributed by R157. Mg(2+) is bound by residues D216 and E217.

This sequence belongs to the anthranilate phosphoribosyltransferase family. In terms of assembly, homodimer. Mg(2+) serves as cofactor.

It carries out the reaction N-(5-phospho-beta-D-ribosyl)anthranilate + diphosphate = 5-phospho-alpha-D-ribose 1-diphosphate + anthranilate. It functions in the pathway amino-acid biosynthesis; L-tryptophan biosynthesis; L-tryptophan from chorismate: step 2/5. Functionally, catalyzes the transfer of the phosphoribosyl group of 5-phosphorylribose-1-pyrophosphate (PRPP) to anthranilate to yield N-(5'-phosphoribosyl)-anthranilate (PRA). This is Anthranilate phosphoribosyltransferase from Methanococcus vannielii (strain ATCC 35089 / DSM 1224 / JCM 13029 / OCM 148 / SB).